A 280-amino-acid polypeptide reads, in one-letter code: Diaminopimelate epimerase (280 aa).

Positions 12, 45, and 65 each coordinate substrate. Residue cysteine 74 is the Proton donor of the active site. Substrate-binding positions include 75 to 76 (GN), asparagine 163, asparagine 196, and 214 to 215 (ER). The Proton acceptor role is filled by cysteine 223. 224–225 (GT) lines the substrate pocket.

This sequence belongs to the diaminopimelate epimerase family. Homodimer.

The protein localises to the cytoplasm. It carries out the reaction (2S,6S)-2,6-diaminopimelate = meso-2,6-diaminopimelate. Its pathway is amino-acid biosynthesis; L-lysine biosynthesis via DAP pathway; DL-2,6-diaminopimelate from LL-2,6-diaminopimelate: step 1/1. Its function is as follows. Catalyzes the stereoinversion of LL-2,6-diaminopimelate (L,L-DAP) to meso-diaminopimelate (meso-DAP), a precursor of L-lysine and an essential component of the bacterial peptidoglycan. This chain is Diaminopimelate epimerase, found in Shewanella sediminis (strain HAW-EB3).